Here is a 417-residue protein sequence, read N- to C-terminus: Transmembrane protease serine 11D (417 aa).

Residues 1 to 17 are Cytoplasmic-facing; sequence MYRPRSMVSPSRFFNPF. A helical; Signal-anchor for type II membrane protein transmembrane segment spans residues 18-38; sequence MVALIVIITVGLLAMTAGLLI. Residues 39–417 are Extracellular-facing; it reads HFLAFDKRAY…RNWIRQQTGI (379 aa). The SEA domain occupies 46–162; sequence RAYFYHSNFH…SNGITSLTDQ (117 aa). Intrachain disulfides connect Cys172–Cys291, Cys211–Cys227, Cys336–Cys352, and Cys363–Cys392. In terms of domain architecture, Peptidase S1 spans 186–416; the sequence is IIGGTQAETG…YRNWIRQQTG (231 aa). Catalysis depends on charge relay system residues His226 and Asp271. The active-site Charge relay system is the Ser367.

The protein belongs to the peptidase S1 family. In terms of assembly, monomer. Isoform 1 and isoform 2 are expressed in the esophagus, tongue and trachea. Isoform 2 is also highly expressed in the adrenal cortex and heart.

Its subcellular location is the cell membrane. The protein resides in the secreted. Its function is as follows. May play some biological role in the host defense system on the mucous membrane independently of or in cooperation with other substances in airway mucous or bronchial secretions. Plays a role in the proteolytic processing of ACE2. Preferentially cleaves the C-terminal side of arginine residues at the P1 position of certain peptides. Isoform 2 may play a key role in regulating adrenal proliferation by specifically cleaving N-POMC. The sequence is that of Transmembrane protease serine 11D (Tmprss11d) from Rattus norvegicus (Rat).